Here is a 602-residue protein sequence, read N- to C-terminus: Sensor histidine kinase AtsR (602 aa).

Helical transmembrane passes span 11–31 (IIVA…FLLF) and 182–202 (AIVM…LLLF). The region spanning 242-461 (MVSHELRTPL…EFVVTLPVEL (220 aa)) is the Histidine kinase domain. His245 bears the Phosphohistidine; by autocatalysis mark. Residues 484 to 601 (HALVVDDNEN…TLNGIVSRLR (118 aa)) form the Response regulatory domain. 4-aspartylphosphate is present on Asp533.

Its subcellular location is the cell inner membrane. It carries out the reaction ATP + protein L-histidine = ADP + protein N-phospho-L-histidine.. In terms of biological role, member of a two-component regulatory system involved in control of gene expression; inhibits synthesis of (at least) the polyketide antibiotic thailandamide. Its two-component partner may be BTH_I0635. The sequence is that of Sensor histidine kinase AtsR from Burkholderia thailandensis (strain ATCC 700388 / DSM 13276 / CCUG 48851 / CIP 106301 / E264).